A 682-amino-acid polypeptide reads, in one-letter code: DNA-directed RNA polymerase subunit beta' (682 aa).

Positions 69, 71, 87, and 90 each coordinate Zn(2+). Mg(2+) is bound by residues D489, D491, and D493.

This sequence belongs to the RNA polymerase beta' chain family. RpoC1 subfamily. As to quaternary structure, in plastids the minimal PEP RNA polymerase catalytic core is composed of four subunits: alpha, beta, beta', and beta''. When a (nuclear-encoded) sigma factor is associated with the core the holoenzyme is formed, which can initiate transcription. The cofactor is Mg(2+). It depends on Zn(2+) as a cofactor.

The protein localises to the plastid. It is found in the chloroplast. The catalysed reaction is RNA(n) + a ribonucleoside 5'-triphosphate = RNA(n+1) + diphosphate. In terms of biological role, DNA-dependent RNA polymerase catalyzes the transcription of DNA into RNA using the four ribonucleoside triphosphates as substrates. In Acorus gramineus (Dwarf sweet flag), this protein is DNA-directed RNA polymerase subunit beta'.